Reading from the N-terminus, the 85-residue chain is UPF0181 protein YPTS_1774 (85 aa).

A compositionally biased stretch (basic and acidic residues) spans 57 to 72 (DHDFDEHTESDYRRDD). The segment at 57–85 (DHDFDEHTESDYRRDDEPDADDIEDLYEG) is disordered. Residues 73 to 85 (EPDADDIEDLYEG) show a composition bias toward acidic residues.

The protein belongs to the UPF0181 family.

This Yersinia pseudotuberculosis serotype IB (strain PB1/+) protein is UPF0181 protein YPTS_1774.